We begin with the raw amino-acid sequence, 120 residues long: MEIGVDIVDLDRIEKAYNRYGVKFLQRFLSEEEITLCLQKPQVIASIAGRFAAKEAVVKALGTGFSSGVHWKSFAILNDKQGRPFVQPADAGCFPACGAIKISIAHDRHAAIATALIEWV.

Asp-6 and Glu-55 together coordinate Mg(2+).

Belongs to the P-Pant transferase superfamily. AcpS family. It depends on Mg(2+) as a cofactor.

The protein resides in the cytoplasm. The enzyme catalyses apo-[ACP] + CoA = holo-[ACP] + adenosine 3',5'-bisphosphate + H(+). Its function is as follows. Transfers the 4'-phosphopantetheine moiety from coenzyme A to a Ser of acyl-carrier-protein. This is Holo-[acyl-carrier-protein] synthase from Pelodictyon phaeoclathratiforme (strain DSM 5477 / BU-1).